The following is a 272-amino-acid chain: MEEVVAERSNLGGVRHILLVLSGKGGVGKSTISTELALSLRHSGKKVGILDVDLCGPSIPRMFKVQDNDVHQCDAGWVPVFVDQEKSISLMSIGFLLEKPDDAVVWRGPKKNALIKQFVADVAWGELDFLIVDTPPGTSDEHISTVEALRPYKPLGAILVTTPQAVSVGDVRRELTFCKKTGLRVLGIVENMSGFVCPHCSECTNIFSKGGGEELAKHAGVPFLGSVPLDPQLSQSLEEGRDFIQEFPKSSAFPALTRIAQQILDGALQRSS.

An ATP-binding site is contributed by 23-30; the sequence is GKGGVGKS. [4Fe-4S] cluster-binding residues include Cys-197 and Cys-200.

Belongs to the Mrp/NBP35 ATP-binding proteins family. NUBP2/CFD1 subfamily. As to quaternary structure, heterotetramer of 2 NUBP1 and 2 NUBP2 chains. [4Fe-4S] cluster is required as a cofactor.

The protein localises to the cytoplasm. In terms of biological role, component of the cytosolic iron-sulfur (Fe/S) protein assembly (CIA) machinery. Required for maturation of extramitochondrial Fe-S proteins. The NUBP1-NUBP2 heterotetramer forms a Fe-S scaffold complex, mediating the de novo assembly of an Fe-S cluster and its transfer to target apoproteins. This chain is Cytosolic Fe-S cluster assembly factor NUBP2, found in Gallus gallus (Chicken).